The following is a 314-amino-acid chain: uncharacterized protein (314 aa).

Positions 192–289 constitute an HTH araC/xylS-type domain; that stretch reads TEVKLHIKDN…GSSPGLFRSL (98 aa). DNA-binding regions (H-T-H motif) lie at residues 209 to 230 and 257 to 279; these read TDVA…AAEL and IKEI…SAKI.

This is an uncharacterized protein from Bacillus subtilis (strain 168).